The primary structure comprises 188 residues: Elongation factor P-like protein (188 aa).

The protein belongs to the elongation factor P family.

This Xanthomonas axonopodis pv. citri (strain 306) protein is Elongation factor P-like protein.